Reading from the N-terminus, the 255-residue chain is Large ribosomal subunit protein uL4 (255 aa).

The protein belongs to the universal ribosomal protein uL4 family. Part of the 50S ribosomal subunit.

Functionally, one of the primary rRNA binding proteins, this protein initially binds near the 5'-end of the 23S rRNA. It is important during the early stages of 50S assembly. It makes multiple contacts with different domains of the 23S rRNA in the assembled 50S subunit and ribosome. Its function is as follows. Forms part of the polypeptide exit tunnel. This chain is Large ribosomal subunit protein uL4, found in Thermococcus gammatolerans (strain DSM 15229 / JCM 11827 / EJ3).